Reading from the N-terminus, the 361-residue chain is UDP-3-O-acylglucosamine N-acyltransferase (361 aa).

Histidine 258 acts as the Proton acceptor in catalysis.

It belongs to the transferase hexapeptide repeat family. LpxD subfamily. Homotrimer.

The catalysed reaction is a UDP-3-O-[(3R)-3-hydroxyacyl]-alpha-D-glucosamine + a (3R)-hydroxyacyl-[ACP] = a UDP-2-N,3-O-bis[(3R)-3-hydroxyacyl]-alpha-D-glucosamine + holo-[ACP] + H(+). The protein operates within bacterial outer membrane biogenesis; LPS lipid A biosynthesis. Functionally, catalyzes the N-acylation of UDP-3-O-acylglucosamine using 3-hydroxyacyl-ACP as the acyl donor. Is involved in the biosynthesis of lipid A, a phosphorylated glycolipid that anchors the lipopolysaccharide to the outer membrane of the cell. This is UDP-3-O-acylglucosamine N-acyltransferase from Nitrobacter hamburgensis (strain DSM 10229 / NCIMB 13809 / X14).